We begin with the raw amino-acid sequence, 311 residues long: Malate dehydrogenase (311 aa).

Residues 7–12 (GAGNVG) and Asp32 each bind NAD(+). The substrate site is built by Arg82 and Arg88. Residues Asn95 and 118 to 120 (VSN) contribute to the NAD(+) site. The substrate site is built by Asn120 and Arg151. His175 acts as the Proton acceptor in catalysis.

The protein belongs to the LDH/MDH superfamily. MDH type 3 family. As to quaternary structure, homotetramer.

The catalysed reaction is (S)-malate + NAD(+) = oxaloacetate + NADH + H(+). Strongly inhibited by iodoacetic acid and CuCl(2). Completely inhibited by N-ethylmaleimide and HgCl(2). Catalyzes the reversible oxidation of malate to oxaloacetate. Can use both NAD and NADP for malate oxidation, but NADPH cannot be used for oxaloacetate reduction. The polypeptide is Malate dehydrogenase (Flavobacterium frigidimaris).